The sequence spans 265 residues: Tyrosine protein kinase-interacting protein (265 aa).

The span at 1 to 14 (MANEGEEIELTEFP) shows a compositional bias: acidic residues. The interval 1-49 (MANEGEEIELTEFPETEKERKDEEKLSSCSEETTDTSSSSSSDHVPAPI) is disordered. Over 1-238 (MANEGEEIEL…LKRLENKVNA (238 aa)) the chain is Cytoplasmic. Residues 15 to 26 (ETEKERKDEEKL) are compositionally biased toward basic and acidic residues. Residues 27–43 (SSCSEETTDTSSSSSSD) show a composition bias toward low complexity. A Phosphotyrosine; by host LCK modification is found at Tyr123. Tyr136 carries the phosphotyrosine; by host modification. Residues 155 to 164 (EDLQSFLEKY) are CSKH/LBD2. The tract at residues 172-192 (KRDLSATWDPGMPTPALPPRP) is disordered. Residues 183–192 (MPTPALPPRP) are SH3B/LBD1. Residues 183-192 (MPTPALPPRP) show a composition bias toward pro residues. The tract at residues 225–234 (IVKDLKRLEN) is SH3 binding. A helical membrane pass occupies residues 239-259 (IICLVVVILAVLLLVTVLSIL). Over 260–265 (HIGMKS) the chain is Extracellular.

As to quaternary structure, binds host LCK, human WDR48 and human NXF1/TAP. Forms a complex with activated LCK and STAT1 and STAT3. Phosphorylation on Tyr-123 acts as a docking site for the recruitment of STATs 1 and 3.

It is found in the host cell membrane. Functionally, plays a critical role in virus induced T-cell transformation. Binds to T-cell-specific tyrosine kinase LCK SH2 and SH3 domains, thereby activating its kinase activity. Once phosphorylated by host LCK, forms a complex with at least STAT 1 and 3, resulting on the phosphorylation of STAT3 and presumably STAT1, and their migration into the nucleus to induce transcription of target genes. Stimulates host ILF3/NF-AT-90 activity. Association with host NXF1/TAP transduces the signal up-regulating surface expression of adhesion molecules as well as activating NF-kappa-B activity. Acts synergistically with StpC to stimulate NF-kappa-B activity and interleukin-2 gene expression. Activation of NF-kappa-B protects lymphocytes from apoptosis, thereby facilitating viral induced cell transformation. May cause down-regulation of host LCK and cell apoptosis when stably overexpressed ex vivo. Interaction with WDR48 induce degradation of T-cell receptor in a lysosome-dependent fashion, when both proteins are overexpressed. The biological effect of this interaction remains controversial since no T-cell receptor degradation is observed in infected cells. This Saimiriine herpesvirus 2 (strain 484) (SaHV-2) protein is Tyrosine protein kinase-interacting protein.